The primary structure comprises 262 residues: Nodulation protein J (262 aa).

Residues 33 to 259 (ASLLGHLAEP…FLSTALLRRR (227 aa)) enclose the ABC transmembrane type-2 domain. 6 consecutive transmembrane segments (helical) span residues 35–55 (LLGH…GLGV), 60–80 (VGGV…SAMT), 125–145 (AALA…TQWL), 148–168 (LYAL…GMVV), 177–197 (YFIF…GAVF), and 231–251 (VVDV…PFFL).

It belongs to the ABC-2 integral membrane protein family. Lipooligosaccharide exporter (TC 3.A.1.102) subfamily. The complex is composed of two ATP-binding proteins (NodI) and two transmembrane proteins (NodJ).

The protein localises to the cell inner membrane. Functionally, part of the ABC transporter complex NodIJ involved in the export of the nodulation factors (Nod factors), the bacterial signal molecules that induce symbiosis and subsequent nodulation induction. Nod factors are LCO (lipo-chitin oligosaccharide), a modified beta-1,4-linked N-acetylglucosamine oligosaccharide. This subunit encodes the transporter. The chain is Nodulation protein J (nodJ) from Rhizobium leguminosarum bv. trifolii.